Here is a 293-residue protein sequence, read N- to C-terminus: Bifunctional protein FolD 1 (293 aa).

NADP(+) contacts are provided by residues 174 to 176 (GRS) and Thr240.

The protein belongs to the tetrahydrofolate dehydrogenase/cyclohydrolase family. Homodimer.

The enzyme catalyses (6R)-5,10-methylene-5,6,7,8-tetrahydrofolate + NADP(+) = (6R)-5,10-methenyltetrahydrofolate + NADPH. It catalyses the reaction (6R)-5,10-methenyltetrahydrofolate + H2O = (6R)-10-formyltetrahydrofolate + H(+). It functions in the pathway one-carbon metabolism; tetrahydrofolate interconversion. In terms of biological role, catalyzes the oxidation of 5,10-methylenetetrahydrofolate to 5,10-methenyltetrahydrofolate and then the hydrolysis of 5,10-methenyltetrahydrofolate to 10-formyltetrahydrofolate. This chain is Bifunctional protein FolD 1, found in Saccharopolyspora erythraea (strain ATCC 11635 / DSM 40517 / JCM 4748 / NBRC 13426 / NCIMB 8594 / NRRL 2338).